The chain runs to 167 residues: Ribosome maturation factor RimM (167 aa).

The PRC barrel domain occupies 94–165; it reads EHEYYYSDII…TIKITPMEGL (72 aa).

This sequence belongs to the RimM family. In terms of assembly, binds ribosomal protein uS19.

It localises to the cytoplasm. Its function is as follows. An accessory protein needed during the final step in the assembly of 30S ribosomal subunit, possibly for assembly of the head region. Essential for efficient processing of 16S rRNA. May be needed both before and after RbfA during the maturation of 16S rRNA. It has affinity for free ribosomal 30S subunits but not for 70S ribosomes. The sequence is that of Ribosome maturation factor RimM from Staphylococcus epidermidis (strain ATCC 35984 / DSM 28319 / BCRC 17069 / CCUG 31568 / BM 3577 / RP62A).